The sequence spans 158 residues: Urease accessory protein UreE (158 aa).

The protein belongs to the UreE family.

It is found in the cytoplasm. In terms of biological role, involved in urease metallocenter assembly. Binds nickel. Probably functions as a nickel donor during metallocenter assembly. The protein is Urease accessory protein UreE of Microcystis aeruginosa (strain NIES-843 / IAM M-2473).